The primary structure comprises 328 residues: MTQRVVSIVGPTASGKTGLGIAIARRLAEAGERAEIVNADAYQMYRGMDIGTAKPTAEEQAAVPHHLIDIIDPEDTMSVARFQQLARETIADLQSRGIRPILVGGSGLYARAAIDDITFPGTDPDVRTRLEEREKTEGAGALFDELRAKDPEAAARMDPRNPRRTIRALEVIELTGKPYSASLPRYRYVIPSVQIGLDLDRPDLDHRIDLRTKQMYDDGFIEEVERLRPHLGATAVRALGYQQIIDLLDGIWDVNDAFADIAQKTKRLARKQMGWFGRDPRIHWLQALNPKLVDNAMAIIAHADAGDYDPIDARADEYTQHHLGDITA.

ATP is bound at residue 10–17; it reads GPTASGKT. Residue 12–17 participates in substrate binding; it reads TASGKT.

The protein belongs to the IPP transferase family. As to quaternary structure, monomer. Mg(2+) is required as a cofactor.

The catalysed reaction is adenosine(37) in tRNA + dimethylallyl diphosphate = N(6)-dimethylallyladenosine(37) in tRNA + diphosphate. In terms of biological role, catalyzes the transfer of a dimethylallyl group onto the adenine at position 37 in tRNAs that read codons beginning with uridine, leading to the formation of N6-(dimethylallyl)adenosine (i(6)A). The protein is tRNA dimethylallyltransferase of Bifidobacterium longum (strain NCC 2705).